Here is a 521-residue protein sequence, read N- to C-terminus: RING-type E3 ubiquitin-protein ligase PPIL2 (521 aa).

The U-box domain occupies Arg35–Ser108. A coiled-coil region spans residues Leu197–Gly217. Lys216 is covalently cross-linked (Glycyl lysine isopeptide (Lys-Gly) (interchain with G-Cter in SUMO2)). The region spanning Lys278 to Val433 is the PPIase cyclophilin-type domain. Over residues Gln447–Val462 the composition is skewed to basic and acidic residues. The tract at residues Gln447–Trp521 is disordered. Residues Ser465–Arg478 are compositionally biased toward polar residues. Lys483 carries the post-translational modification N6-acetyllysine.

Belongs to the cyclophilin-type PPIase family. PPIL2 subfamily. As to quaternary structure, component of the minor spliceosome, which splices U12-type introns. Within this complex, interacts with PRPF8/PRP8, EFTUD2/SNU114 and PLRG1. Interacts with isoform 2 of BSG. Interacts (via the PPIase cyclophilin-type domain) with CRNKL1; they may form a trimeric complex with HSP90.

Its subcellular location is the nucleus. The enzyme catalyses S-ubiquitinyl-[E2 ubiquitin-conjugating enzyme]-L-cysteine + [acceptor protein]-L-lysine = [E2 ubiquitin-conjugating enzyme]-L-cysteine + N(6)-ubiquitinyl-[acceptor protein]-L-lysine.. The protein operates within protein modification; protein ubiquitination. In terms of biological role, has a ubiquitin-protein ligase activity acting as an E3 ubiquitin protein ligase or as an ubiquitin-ubiquitin ligase promoting elongation of ubiquitin chains on substrates. By mediating 'Lys-48'-linked polyubiquitination of proteins could target them for proteasomal degradation. May also function as a chaperone, playing a role in transport to the cell membrane of BSG/Basigin for instance. Probable inactive PPIase with no peptidyl-prolyl cis-trans isomerase activity. As a component of the minor spliceosome, involved in the splicing of U12-type introns in pre-mRNAs. The sequence is that of RING-type E3 ubiquitin-protein ligase PPIL2 from Mus musculus (Mouse).